Reading from the N-terminus, the 458-residue chain is 5-hydroxytryptamine receptor 2C (458 aa).

The N-terminal stretch at 1-32 is a signal peptide; the sequence is MVNLRKAVHSFLVHLIGLLVWQCDISVSPVAA. The Extracellular segment spans residues 33–55; that stretch reads LVTDIFNTSDGGRFKFPDGVQNW. Residues 56–80 form a helical membrane-spanning segment; the sequence is PALSIVIIIILTIGGNILVIMAVSL. Residues 81 to 86 lie on the Cytoplasmic side of the membrane; it reads EKKLHN. A helical membrane pass occupies residues 87–111; the sequence is ATNYFLMSLAIADMLVGLLVMPLSL. Topologically, residues 112-128 are extracellular; it reads LAILYDYVWPLPRYLCP. C127 and C207 are disulfide-bonded. The chain crosses the membrane as a helical span at residues 129–151; sequence VWISLDVLFSTASIMHLCAISLD. Position 139 (T139) interacts with ergotamine. A DRY motif; important for ligand-induced conformation changes motif is present at residues 151–153; the sequence is DRY. Topologically, residues 152 to 167 are cytoplasmic; the sequence is RYVAIRNPVEHSRFNS. The chain crosses the membrane as a helical span at residues 168-189; that stretch reads RTKAIMKIAIVWAISIGVSVPI. Over 190 to 213 the chain is Extracellular; sequence PVIGLRDEEKVFVNNTTCVLNDPN. Residues N203 and N204 are each glycosylated (N-linked (GlcNAc...) asparagine). L209 provides a ligand contact to ergotamine. A helical membrane pass occupies residues 214–236; the sequence is FVLIGSFVAFFIPLTIMVITYCL. The Cytoplasmic segment spans residues 237-311; it reads TIHVLRRQAL…AINNERKASK (75 aa). A disordered region spans residues 272-301; that stretch reads TEEENSANPNQDSNPRRRKKKERRPRGTMQ. Basic residues predominate over residues 287–297; it reads RRRKKKERRPR. The chain crosses the membrane as a helical span at residues 312–336; sequence VLGIVFFVFLVMWCPFFITNILSVL. Residues C337 and C341 are joined by a disulfide bond. At 337–347 the chain is on the extracellular side; the sequence is CGKACNQKLME. The chain crosses the membrane as a helical span at residues 348–370; the sequence is KLLNVFVWIGYVCSGINPLVYTL. Residues 364 to 368 carry the NPxxY motif; important for ligand-induced conformation changes and signaling motif; that stretch reads NPLVY. Residues 371–458 lie on the Cytoplasmic side of the membrane; sequence FNKIYRRAFS…SVVSERISSV (88 aa). The PDZ-binding motif lies at 456–458; sequence SSV.

It belongs to the G-protein coupled receptor 1 family. As to quaternary structure, interacts with MPDZ. Interacts with ARRB2. Interacts with MPP3; this interaction stabilizes the receptor at the plasma membrane and prevents the desensitization of the HTR2C receptor-mediated calcium response.

Its subcellular location is the cell membrane. G-protein coupled receptor for 5-hydroxytryptamine (serotonin). Also functions as a receptor for various drugs and psychoactive substances, including ergot alkaloid derivatives, 1-2,5,-dimethoxy-4-iodophenyl-2-aminopropane (DOI) and lysergic acid diethylamide (LSD). Ligand binding causes a conformation change that triggers signaling via guanine nucleotide-binding proteins (G proteins) and modulates the activity of downstream effectors. HTR2C is coupled to G(q)/G(11) G alpha proteins and activates phospholipase C-beta, releasing diacylglycerol (DAG) and inositol 1,4,5-trisphosphate (IP3) second messengers that modulate the activity of phosphatidylinositol 3-kinase and promote the release of Ca(2+) ions from intracellular stores, respectively. Beta-arrestin family members inhibit signaling via G proteins and mediate activation of alternative signaling pathways. Regulates neuronal activity via the activation of short transient receptor potential calcium channels in the brain, and thereby modulates the activation of pro-opiomelanocortin neurons and the release of CRH that then regulates the release of corticosterone. Plays a role in the regulation of appetite and eating behavior, responses to anxiogenic stimuli and stress. Plays a role in insulin sensitivity and glucose homeostasis. The protein is 5-hydroxytryptamine receptor 2C of Canis lupus familiaris (Dog).